Here is a 404-residue protein sequence, read N- to C-terminus: Multidrug resistance protein MdtG (404 aa).

11 consecutive transmembrane segments (helical) span residues 19–39 (LGCFLTGAAFSLVMPFLPLYV), 56–76 (LVFSITFLFSAIASPFWGGLA), 90–110 (LGMAIVMLLMGMAQNIWQFLI), 113–133 (ALLGLLGGFIPNANALIATQV), 144–164 (TLSTGGVSGALLGPLAGGLLA), 171–191 (PVFFITASVLFICFLLTFFFI), 222–242 (LFVTTLIIQVATGSIAPILTL), 254–274 (IAFISGMIASVPGVAALLSAP), 288–308 (ILIVALIISVLLLIPMSFVQT), 317–337 (FLLGAADGALLPAVQTLLVYN), and 376–396 (AVFCVTAGVVLFNAIYSWNSL).

This sequence belongs to the major facilitator superfamily. DHA1 family. MdtG (TC 2.A.1.2.20) subfamily.

The protein resides in the cell inner membrane. The sequence is that of Multidrug resistance protein MdtG from Salmonella schwarzengrund (strain CVM19633).